The chain runs to 249 residues: Pleckstrin homology domain-containing family F member 2 (249 aa).

Residues 35 to 131 (VLIGEGVLTK…WMNHINKCVS (97 aa)) enclose the PH domain. Residues 152 to 212 (DSEATVCMRC…ICDSCYDLLS (61 aa)) form an FYVE-type zinc finger. Residues cysteine 158, cysteine 161, cysteine 175, cysteine 178, cysteine 183, cysteine 186, cysteine 204, and cysteine 207 each contribute to the Zn(2+) site. Polar residues predominate over residues 219–232 (CQSTRSDSYSQSPK). The disordered stretch occupies residues 219–249 (CQSTRSDSYSQSPKSSLNDASDDDDDEDSSD). Positions 238–249 (ASDDDDDEDSSD) are enriched in acidic residues.

It localises to the early endosome membrane. Its subcellular location is the endoplasmic reticulum. In terms of biological role, may play a role in early endosome fusion upstream of RAB5, hence regulating receptor trafficking and fluid-phase transport. Enhances cellular sensitivity to TNF-induced apoptosis. The polypeptide is Pleckstrin homology domain-containing family F member 2 (PLEKHF2) (Gallus gallus (Chicken)).